The following is a 190-amino-acid chain: Large ribosomal subunit protein uL6A (190 aa).

The protein belongs to the universal ribosomal protein uL6 family. Component of the large ribosomal subunit (LSU). Mature yeast ribosomes consist of a small (40S) and a large (60S) subunit. The 40S small subunit contains 1 molecule of ribosomal RNA (18S rRNA) and at least 33 different proteins. The large 60S subunit contains 3 rRNA molecules (25S, 5.8S and 5S rRNA) and at least 46 different proteins. uL6 lines the binding pocket for eukaryotic elongation factor 2 (eEF2).

It is found in the cytoplasm. The protein resides in the nucleus. In terms of biological role, component of the ribosome, a large ribonucleoprotein complex responsible for the synthesis of proteins in the cell. The small ribosomal subunit (SSU) binds messenger RNAs (mRNAs) and translates the encoded message by selecting cognate aminoacyl-transfer RNA (tRNA) molecules. The large subunit (LSU) contains the ribosomal catalytic site termed the peptidyl transferase center (PTC), which catalyzes the formation of peptide bonds, thereby polymerizing the amino acids delivered by tRNAs into a polypeptide chain. The nascent polypeptides leave the ribosome through a tunnel in the LSU and interact with protein factors that function in enzymatic processing, targeting, and the membrane insertion of nascent chains at the exit of the ribosomal tunnel. In Schizosaccharomyces pombe (strain 972 / ATCC 24843) (Fission yeast), this protein is Large ribosomal subunit protein uL6A (rpl901).